A 155-amino-acid chain; its full sequence is Transcriptional regulator MraZ (155 aa).

SpoVT-AbrB domains follow at residues 15–62 (TYEN…GMDR) and 93–136 (SEEL…NPTA).

This sequence belongs to the MraZ family. Forms oligomers.

The protein localises to the cytoplasm. It is found in the nucleoid. This is Transcriptional regulator MraZ from Rhodospirillum rubrum (strain ATCC 11170 / ATH 1.1.1 / DSM 467 / LMG 4362 / NCIMB 8255 / S1).